A 297-amino-acid chain; its full sequence is Bifonsecin B biosynthesis cluster protein A (297 aa).

The signal sequence occupies residues 1-20 (MHFWWTAISAGLLCLPQALG). Residues N26, N56, N75, N124, N175, N210, and N280 are each glycosylated (N-linked (GlcNAc...) asparagine).

This sequence belongs to the bfoA family.

Part of the gene cluster that mediates the biosynthesis of bifonsecin B, a dimeric gamma-naphthopyrone. The first step in the biosynthesis of bifonsecin B is the production of gamma-naphthopyrone precursor YWA1 by the non-reducing polyketide synthase albA, via condensation of one acetyl-CoA starter unit with 6 malonyl-CoA units. YWA1 is then methylated by bfoE at position C-6 to yield foncesin which is further methylated at position C-8 by bfoD to produce fonsecin B. A key enzyme in the biosynthetic pathway is the cytochrome P450 monooxygenase bfoB which catalyzes the oxidative dimerization of fonsecin B to bifonsecin B. Bfob also catalyzes the oxidative dimerization of rubrofusarin B into nigerone. The stereoselectivity of bfoB is influenced by the two natural monomeric substrates; homodimerization of fonsecin B yields a stereochemically pure biaryl, M-foncerine B, while rubrofusarin B yields a mixture of enantiomers M- and P-nigerone. The function of bfoA within the bifonsecin B biosynthesis pathway has not been determined yet. This Aspergillus brasiliensis (strain CBS 101740 / IMI 381727 / IBT 21946) protein is Bifonsecin B biosynthesis cluster protein A.